Consider the following 122-residue polypeptide: S-adenosylmethionine decarboxylase proenzyme (122 aa).

The Schiff-base intermediate with substrate; via pyruvic acid role is filled by S63. S63 is modified (pyruvic acid (Ser); by autocatalysis). H68 acts as the Proton acceptor; for processing activity in catalysis. C83 functions as the Proton donor; for catalytic activity in the catalytic mechanism.

The protein belongs to the prokaryotic AdoMetDC family. Type 1 subfamily. Heterotetramer of two alpha and two beta chains arranged as a dimer of alpha/beta heterodimers. Pyruvate is required as a cofactor. Post-translationally, is synthesized initially as an inactive proenzyme. Formation of the active enzyme involves a self-maturation process in which the active site pyruvoyl group is generated from an internal serine residue via an autocatalytic post-translational modification. Two non-identical subunits are generated from the proenzyme in this reaction, and the pyruvate is formed at the N-terminus of the alpha chain, which is derived from the carboxyl end of the proenzyme. The post-translation cleavage follows an unusual pathway, termed non-hydrolytic serinolysis, in which the side chain hydroxyl group of the serine supplies its oxygen atom to form the C-terminus of the beta chain, while the remainder of the serine residue undergoes an oxidative deamination to produce ammonia and the pyruvoyl group blocking the N-terminus of the alpha chain.

The enzyme catalyses S-adenosyl-L-methionine + H(+) = S-adenosyl 3-(methylsulfanyl)propylamine + CO2. Its pathway is amine and polyamine biosynthesis; S-adenosylmethioninamine biosynthesis; S-adenosylmethioninamine from S-adenosyl-L-methionine: step 1/1. Its function is as follows. Catalyzes the decarboxylation of S-adenosylmethionine to S-adenosylmethioninamine (dcAdoMet), the propylamine donor required for the synthesis of the polyamines spermine and spermidine from the diamine putrescine. The sequence is that of S-adenosylmethionine decarboxylase proenzyme from Methanococcus maripaludis (strain DSM 14266 / JCM 13030 / NBRC 101832 / S2 / LL).